Here is a 303-residue protein sequence, read N- to C-terminus: Sulfotransferase 6B1 (303 aa).

65 to 70 (KCGSNW) contributes to the 3'-phosphoadenylyl sulfate binding site. The Proton acceptor role is filled by histidine 118. 3'-phosphoadenylyl sulfate contacts are provided by residues arginine 140, serine 148, tyrosine 203, 237–242 (STFQAM), and 259–261 (RKG).

This sequence belongs to the sulfotransferase 1 family.

The protein resides in the cytoplasm. The protein localises to the cytosol. It catalyses the reaction thyroxine + 3'-phosphoadenylyl sulfate = thyroxine sulfate + adenosine 3',5'-bisphosphate + H(+). In terms of biological role, sulfotransferase that utilizes 3'-phospho-5'-adenylyl sulfate (PAPS) as sulfonate donor to catalyze the sulfate conjugation of thyroxine. Involved in the metabolism of thyroxine. This Gorilla gorilla gorilla (Western lowland gorilla) protein is Sulfotransferase 6B1 (SULT6B1).